Here is a 1765-residue protein sequence, read N- to C-terminus: RANBP2-like and GRIP domain-containing protein 5/6 (1765 aa).

Thr19 is modified (phosphothreonine). At Ser21 the chain carries Phosphoserine. 3 TPR repeats span residues 26-59 (SMKG…QERD), 60-93 (PKAH…NPTQ), and 648-681 (EDAH…VSYW). Disordered regions lie at residues 760–804 (GPLY…PRWT) and 924–945 (FGIS…NDTG). The span at 778–797 (STPSPTKYSLSPSKSYKYSP) shows a compositional bias: low complexity. The span at 931–941 (NQEKKREKPLE) shows a compositional bias: basic and acidic residues. The region spanning 1036 to 1172 (HFEPVVQMPE…FEECQRLLLD (137 aa)) is the RanBD1 1 domain. Disordered stretches follow at residues 1214 to 1247 (KVTE…PTLE) and 1306 to 1330 (AKLN…EERD). The segment covering 1235–1244 (IKPNAENTGP) has biased composition (polar residues). Over residues 1317–1329 (TDEESVVTQEEER) the composition is skewed to acidic residues. Residues 1333–1469 (YFEPVVPLPD…FDEAKTAQEK (137 aa)) enclose the RanBD1 2 domain. Over residues 1580-1593 (NNSETSSVAQSGSE) the composition is skewed to polar residues. The segment at 1580 to 1621 (NNSETSSVAQSGSESKVEPKKCELSKNSDIEQSSDSKVKNLS) is disordered. Residues 1594–1617 (SKVEPKKCELSKNSDIEQSSDSKV) are compositionally biased toward basic and acidic residues. In terms of domain architecture, GRIP spans 1702 to 1752 (REKSAANLEYLKNVLLQFIFLKPGSERERLLPVINTMLQLSPEEKGKLAAV).

Expressed in testis.

The protein localises to the cytoplasm. The polypeptide is RANBP2-like and GRIP domain-containing protein 5/6 (RGPD5) (Homo sapiens (Human)).